Reading from the N-terminus, the 605-residue chain is Methyl-CpG-binding domain protein 1 (605 aa).

The region spanning 1 to 69 is the MBD domain; sequence MAEDWLDCPA…TLFDFKQGIL (69 aa). The disordered stretch occupies residues 80 to 123; the sequence is AVASKKRKKPSRPAKTRKRQVGPQSGEVRKEAPRDETKADTDTA. Positions 83–99 are enriched in basic residues; the sequence is SKKRKKPSRPAKTRKRQ. The Nuclear localization signal motif lies at 84–88; that stretch reads KKRKK. A compositionally biased stretch (basic and acidic residues) spans 106–120; sequence EVRKEAPRDETKADT. Lysine 117 is covalently cross-linked (Glycyl lysine isopeptide (Lys-Gly) (interchain with G-Cter in SUMO2)). CXXC-type zinc fingers lie at residues 169–216 and 217–263; these read RMFK…RRCL and RIVE…RRCL. 16 residues coordinate Zn(2+): cysteine 176, cysteine 179, cysteine 182, cysteine 188, cysteine 191, cysteine 194, cysteine 210, cysteine 215, cysteine 225, cysteine 228, cysteine 231, cysteine 237, cysteine 240, cysteine 243, cysteine 257, and cysteine 262. The interval 269–308 is disordered; that stretch reads RRKGGCDSKMAARRRPGAQPLPPPPPSQSPEPTEPHPRAL. Residue lysine 277 forms a Glycyl lysine isopeptide (Lys-Gly) (interchain with G-Cter in SUMO2) linkage. Positions 287-297 are enriched in pro residues; the sequence is QPLPPPPPSQS. Serine 297 carries the post-translational modification Phosphoserine. The CXXC-type 3 zinc finger occupies 330 to 378; it reads TNRRQNRKCGACAACLRRMDCGRCDFCCDKPKFGGSNQKRQKCRWRQCL. Zn(2+) is bound by residues cysteine 338, cysteine 341, cysteine 344, cysteine 350, cysteine 353, cysteine 356, cysteine 372, and cysteine 377. Residues serine 391 and serine 399 each carry the phosphoserine modification. Positions 391–451 are disordered; sequence SESEDGAGSP…EAGGGFVLPP (61 aa). The span at 403–417 shows a compositional bias: basic residues; the sequence is YRRRKRPSSARRHHL. Lysine 422 participates in a covalent cross-link: Glycyl lysine isopeptide (Lys-Gly) (interchain with G-Cter in SUMO2). A compositionally biased stretch (polar residues) spans 426-439; that stretch reads ATRTAQPDHTQAPT. Lysine 440 participates in a covalent cross-link: Glycyl lysine isopeptide (Lys-Gly) (interchain with G-Cter in SUMO2). Glycyl lysine isopeptide (Lys-Gly) (interchain with G-Cter in SUMO2); alternate cross-links involve residues lysine 499 and lysine 538. The disordered stretch occupies residues 520 to 573; that stretch reads VLVPGCPSKAVDPGLPSVKQEPPDPEEDKEENKDDSASKLAPEEEAGGAGTPVI. The interval 529-592 is transcriptional repression domain (TRD); it reads AVDPGLPSVK…RFRDTAVWLP (64 aa). A Glycyl lysine isopeptide (Lys-Gly) (interchain with G-Cter in SUMO2) cross-link involves residue lysine 558.

Interacts with OASL, ATF7IP, ATF7IP2 and BAHD1. Binds CHAF1A and the SUV39H1-CBX5 complex via the MBD domain. Binds MGP via the TRD domain. May be part of the MeCP1 complex. In terms of processing, sumoylated, sumoylation may increase interaction with ATF7IP. In terms of tissue distribution, widely expressed.

It localises to the nucleus. Its subcellular location is the nucleus matrix. The protein localises to the nucleus speckle. The protein resides in the chromosome. In terms of biological role, transcriptional repressor that binds CpG islands in promoters where the DNA is methylated at position 5 of cytosine within CpG dinucleotides. Binding is abolished by the presence of 7-mG that is produced by DNA damage by methylmethanesulfonate (MMS). Acts as transcriptional repressor and plays a role in gene silencing by recruiting ATF7IP, which in turn recruits factors such as the histone methyltransferase SETDB1. Probably forms a complex with SETDB1 and ATF7IP that represses transcription and couples DNA methylation and histone 'Lys-9' trimethylation. Isoform 1 and isoform 2 can also repress transcription from unmethylated promoters. The chain is Methyl-CpG-binding domain protein 1 from Homo sapiens (Human).